Here is a 360-residue protein sequence, read N- to C-terminus: Peptide chain release factor 1 (360 aa).

Gln235 carries the post-translational modification N5-methylglutamine.

This sequence belongs to the prokaryotic/mitochondrial release factor family. Post-translationally, methylated by PrmC. Methylation increases the termination efficiency of RF1.

The protein localises to the cytoplasm. Peptide chain release factor 1 directs the termination of translation in response to the peptide chain termination codons UAG and UAA. This Methylobacillus flagellatus (strain ATCC 51484 / DSM 6875 / VKM B-1610 / KT) protein is Peptide chain release factor 1.